Consider the following 524-residue polypeptide: Beta-glucosidase 23 (524 aa).

The first 24 residues, 1–24 (MVLQKLPLIGLLLLLTIVASPANA), serve as a signal peptide directing secretion. Glutamine 54 contributes to the a beta-D-glucoside binding site. N-linked (GlcNAc...) asparagine glycosylation is present at asparagine 60. Residues histidine 157 and 202–203 (NE) each bind a beta-D-glucoside. Glutamate 203 serves as the catalytic Proton donor. The cysteines at positions 222 and 230 are disulfide-linked. A beta-D-glucoside is bound by residues tyrosine 346 and glutamate 418. Glutamate 418 functions as the Nucleophile in the catalytic mechanism. Asparagine 461 carries N-linked (GlcNAc...) asparagine glycosylation. A beta-D-glucoside-binding positions include tryptophan 468, 475-476 (EW), and phenylalanine 484. Asparagine 494 carries an N-linked (GlcNAc...) asparagine glycan. A Prevents secretion from ER motif is present at residues 521–524 (KDEL).

The protein belongs to the glycosyl hydrolase 1 family. As to quaternary structure, homodimers. Binds to the deubiquitinating enzyme AMSH3. The inactive form interacts with PBP1/JAL30 to form the PYK10 complex, at least composed of PYK10/BGLU23, BGLU21, BGLU22, JAL22, JAL23, PBP1/JAL30, PBP2/JAL31, JAL32, JAL33, JAL34, JAL35, GLL22 and GLL23. Forms interchain disulfide bonds. As to expression, expressed exclusively in roots.

Its subcellular location is the endoplasmic reticulum lumen. The enzyme catalyses Hydrolysis of terminal, non-reducing beta-D-glucosyl residues with release of beta-D-glucose.. Its activity is regulated as follows. Activated by tissue damage and upon binding to PBP1 or PBP2. Functionally, beta-D-glucosidase active on scopolin &gt; esculin &gt;&gt; 4-MU-glucoside &gt;&gt; DIMBOA-glucoside. No activity with pNP-glucoside, oNP-glucoside and sinigrin as substrates. May possess beta-D-fucosidase activity. Required for the beneficial interaction with the endophytic fungus P.indica. May participate in the control of root colonization by P.indica by repressing defense responses and modulating other responses required for a mutualistic interaction. The sequence is that of Beta-glucosidase 23 from Arabidopsis thaliana (Mouse-ear cress).